A 345-amino-acid polypeptide reads, in one-letter code: Hydroxymethylglutaryl-CoA synthase (345 aa).

(3S)-3-hydroxy-3-methylglutaryl-CoA is bound at residue Asp28. Glu80 functions as the Proton donor/acceptor in the catalytic mechanism. Residues Cys112 and Thr153 each coordinate (3S)-3-hydroxy-3-methylglutaryl-CoA. Cys112 serves as the catalytic Acyl-thioester intermediate. Arg199 provides a ligand contact to CoA. Thr201 and His234 together coordinate (3S)-3-hydroxy-3-methylglutaryl-CoA. The active-site Proton donor/acceptor is His234. Residue Lys239 participates in CoA binding. Residues Arg243, Asn266, and Ser296 each contribute to the (3S)-3-hydroxy-3-methylglutaryl-CoA site.

Belongs to the thiolase-like superfamily. Archaeal HMG-CoA synthase family. Interacts with acetoacetyl-CoA thiolase that catalyzes the precedent step in the pathway and with a DUF35 protein. The acetoacetyl-CoA thiolase/HMG-CoA synthase complex channels the intermediate via a fused CoA-binding site, which allows for efficient coupling of the endergonic thiolase reaction with the exergonic HMGCS reaction.

It carries out the reaction acetoacetyl-CoA + acetyl-CoA + H2O = (3S)-3-hydroxy-3-methylglutaryl-CoA + CoA + H(+). It functions in the pathway metabolic intermediate biosynthesis; (R)-mevalonate biosynthesis; (R)-mevalonate from acetyl-CoA: step 2/3. In terms of biological role, catalyzes the condensation of acetyl-CoA with acetoacetyl-CoA to form 3-hydroxy-3-methylglutaryl-CoA (HMG-CoA). Functions in the mevalonate (MVA) pathway leading to isopentenyl diphosphate (IPP), a key precursor for the biosynthesis of isoprenoid compounds that are building blocks of archaeal membrane lipids. The sequence is that of Hydroxymethylglutaryl-CoA synthase from Methanobrevibacter smithii (strain ATCC 35061 / DSM 861 / OCM 144 / PS).